The primary structure comprises 567 residues: Urease subunit alpha (567 aa).

In terms of domain architecture, Urease spans 129 to 567 (GGVDTHIHFI…LPMAQRYFLF (439 aa)). The Ni(2+) site is built by H134, H136, and K217. At K217 the chain carries N6-carboxylysine. H219 contributes to the substrate binding site. Ni(2+) is bound by residues H246 and H272. H320 functions as the Proton donor in the catalytic mechanism. D360 contributes to the Ni(2+) binding site.

Belongs to the metallo-dependent hydrolases superfamily. Urease alpha subunit family. In terms of assembly, heterotrimer of UreA (gamma), UreB (beta) and UreC (alpha) subunits. Three heterotrimers associate to form the active enzyme. Ni cation serves as cofactor. Carboxylation allows a single lysine to coordinate two nickel ions.

It localises to the cytoplasm. The catalysed reaction is urea + 2 H2O + H(+) = hydrogencarbonate + 2 NH4(+). The protein operates within nitrogen metabolism; urea degradation; CO(2) and NH(3) from urea (urease route): step 1/1. This chain is Urease subunit alpha, found in Aliivibrio fischeri (strain MJ11) (Vibrio fischeri).